The primary structure comprises 201 residues: ATP-dependent Clp protease proteolytic subunit (201 aa).

Residue S100 is the Nucleophile of the active site. H125 is an active-site residue.

This sequence belongs to the peptidase S14 family. Component of the chloroplastic Clp protease core complex.

It is found in the plastid. Its subcellular location is the chloroplast stroma. The catalysed reaction is Hydrolysis of proteins to small peptides in the presence of ATP and magnesium. alpha-casein is the usual test substrate. In the absence of ATP, only oligopeptides shorter than five residues are hydrolyzed (such as succinyl-Leu-Tyr-|-NHMec, and Leu-Tyr-Leu-|-Tyr-Trp, in which cleavage of the -Tyr-|-Leu- and -Tyr-|-Trp bonds also occurs).. Its function is as follows. Cleaves peptides in various proteins in a process that requires ATP hydrolysis. Has a chymotrypsin-like activity. Plays a major role in the degradation of misfolded proteins. This Ranunculus macranthus (Large buttercup) protein is ATP-dependent Clp protease proteolytic subunit.